We begin with the raw amino-acid sequence, 319 residues long: Ankyrin repeat domain-containing protein 1 (319 aa).

Residues 55–89 (LGEEQRKSEKVREAELKKKKLEQRSKLENLEDLEI) are a coiled coil. ANK repeat units lie at residues 152-181 (YKRT…QIEF), 185-214 (LEST…KISA), 218-247 (LLST…DLNA), 251-280 (EGDT…DLNV), and 284-315 (AGKT…KNSR).

As to quaternary structure, interacts with TTN/titin. Interacts with YBX1. Expressed in heart, cardiac muscle.

Its subcellular location is the nucleus. May play an important role in endothelial cell activation. May act as a nuclear transcription factor that negatively regulates the expression of cardiac genes. This Rattus norvegicus (Rat) protein is Ankyrin repeat domain-containing protein 1 (Ankrd1).